Here is a 364-residue protein sequence, read N- to C-terminus: Putative [LysW]-aminoadipate semialdehyde/glutamate semialdehyde transaminase (364 aa).

Pyridoxal 5'-phosphate-binding positions include 90-91 and Phe-117; that span reads GT. Arg-120 lines the substrate pocket. Pyridoxal 5'-phosphate is bound at residue 202–205; that stretch reads DEVQ. At Lys-230 the chain carries N6-(pyridoxal phosphate)lysine. Position 254 (Ser-254) interacts with substrate. Thr-255 contacts pyridoxal 5'-phosphate.

The protein belongs to the class-III pyridoxal-phosphate-dependent aminotransferase family. LysJ subfamily. As to quaternary structure, homodimer. Pyridoxal 5'-phosphate is required as a cofactor.

It localises to the cytoplasm. The enzyme catalyses [amino-group carrier protein]-C-terminal-gamma-(L-lysyl)-L-glutamate + 2-oxoglutarate = [amino-group carrier protein]-C-terminal-N-(1-carboxy-5-oxopentan-1-yl)-L-glutamine + L-glutamate. It carries out the reaction [amino-group carrier protein]-C-terminal-gamma-(L-ornithyl)-L-glutamate + 2-oxoglutarate = [amino-group carrier protein]-C-terminal-gamma-(L-glutamyl-5-semialdehyde)-L-glutamate + L-glutamate. It participates in amino-acid biosynthesis; L-lysine biosynthesis via AAA pathway; L-lysine from L-alpha-aminoadipate (Thermus route): step 4/5. Its pathway is amino-acid biosynthesis; L-arginine biosynthesis. In terms of biological role, involved in both the arginine and lysine biosynthetic pathways. This chain is Putative [LysW]-aminoadipate semialdehyde/glutamate semialdehyde transaminase, found in Pyrococcus abyssi (strain GE5 / Orsay).